Consider the following 72-residue polypeptide: Prokaryotic ubiquitin-like protein Pup (72 aa).

Over residues M1–Q10 the composition is skewed to gly residues. Residues M1–S41 form a disordered region. Residues E21–E61 adopt a coiled-coil conformation. Residues N28–Y66 are ARC ATPase binding. Over residues S31 to S41 the composition is skewed to basic and acidic residues. E72 is covalently cross-linked (Isoglutamyl lysine isopeptide (Glu-Lys) (interchain with K-? in acceptor proteins)).

It belongs to the prokaryotic ubiquitin-like protein family. As to quaternary structure, strongly interacts with the proteasome-associated ATPase ARC through a hydrophobic interface; the interacting region of Pup lies in its C-terminal half. There is one Pup binding site per ARC hexamer ring.

It functions in the pathway protein degradation; proteasomal Pup-dependent pathway. Functionally, protein modifier that is covalently attached to lysine residues of substrate proteins, thereby targeting them for proteasomal degradation. The tagging system is termed pupylation. The chain is Prokaryotic ubiquitin-like protein Pup from Frankia alni (strain DSM 45986 / CECT 9034 / ACN14a).